Consider the following 1748-residue polypeptide: Tight junction protein 1 (1748 aa).

The PDZ 1 domain occupies 23–110 (TVTLHRAPGF…NAKITIRRKK (88 aa)). The span at 102 to 112 (AKITIRRKKKV) shows a compositional bias: basic residues. The tract at residues 102-189 (AKITIRRKKK…QPAKPTKVTL (88 aa)) is disordered. Residues 123-136 (PVSDNEEDSYDEEI) show a composition bias toward acidic residues. Ser125 carries the post-translational modification Phosphoserine. Residue Tyr132 is modified to Phosphotyrosine. Positions 149–175 (RRSEKIWPRDRSASRERSLSPRSDRRS) are enriched in basic and acidic residues. Residues Ser175, Ser178, and Ser179 each carry the phosphoserine modification. Thr185 is modified (phosphothreonine). The PDZ 2 domain maps to 186 to 264 (KVTLVKSRKN…KLKMVVQRDE (79 aa)). 2 positions are modified to phosphoserine: Ser212 and Ser241. Thr267 is modified (phosphothreonine). 13 positions are modified to phosphoserine: Ser275, Ser277, Ser280, Ser284, Ser290, Ser294, Ser297, Ser300, Ser323, Ser329, Ser334, Ser337, and Ser353. Residues 295–396 (LASDHSGRSH…PVYAQVGQPD (102 aa)) form a disordered region. Residues 299–327 (HSGRSHDRPPRRSRSRSPDQRSEPSDHSR) are compositionally biased toward basic and acidic residues. Residues 329 to 338 (SPQQPSNGSL) show a composition bias toward polar residues. The residue at position 354 (Thr354) is a Phosphothreonine. Basic and acidic residues predominate over residues 357–377 (KHADDHTPKTVEEVTVERNEK). One can recognise a PDZ 3 domain in the interval 421 to 502 (SMKLVKFRKG…GEEVTILAQK (82 aa)). The SH3 domain occupies 516–584 (GDSFYIRTHF…PNKNRAEQLA (69 aa)). Residues 598–779 (RADFWRFRGL…TTTINLNSMN (182 aa)) form the Guanylate kinase-like domain. Phosphoserine occurs at positions 617 and 622. The interval 633 to 876 (YERVVLREAG…GTPPESAITR (244 aa)) is occludin (OCLN)-binding region. Residue Thr809 is modified to Phosphothreonine. Phosphoserine occurs at positions 810 and 821. Phosphotyrosine is present on Tyr822. A phosphoserine mark is found at Ser824, Ser828, and Ser837. Disordered stretches follow at residues 825 to 1081 (APGS…LRYE) and 1095 to 1587 (DDKQ…PEFD). A phosphothreonine mark is found at Thr846, Thr848, Thr854, Thr861, and Thr868. Basic and acidic residues predominate over residues 879 to 892 (EPVREDSSGMHHEN). Residues 893–906 (QTYPPYSPQAQPQP) show a composition bias toward low complexity. The residue at position 912 (Ser912) is a Phosphoserine. Composition is skewed to polar residues over residues 934–953 (PETN…NLTN) and 963–979 (PSTS…TPST). At Ser968 the chain carries Phosphoserine. Residues 998 to 1014 (DPTKVYRKDPYPEEMMR) show a composition bias toward basic and acidic residues. The segment covering 1061–1072 (YESSSYTDQFSR) has biased composition (polar residues). Phosphoserine occurs at positions 1071, 1111, and 1139. A compositionally biased stretch (basic and acidic residues) spans 1110 to 1125 (HSQDLDSRQHPEESSE). Tyr1140 and Tyr1165 each carry phosphotyrosine. Residues 1151 to 1371 (RASALRHEEQ…FDRRSFENKP (221 aa)) form an actin-binding region (ABR) region. 2 stretches are compositionally biased toward basic and acidic residues: residues 1269–1286 (KMFE…KDVN) and 1336–1347 (PPEDIVRSNHYD). Phosphotyrosine is present on Tyr1354. Phosphoserine is present on Ser1366. Positions 1389 to 1400 (SQNQSNFSSYSS) are enriched in low complexity. Over residues 1403–1420 (KPPEADGVDRSFGEKRYE) the composition is skewed to basic and acidic residues. Residue Ser1413 is modified to Phosphoserine. Polar residues-rich tracts occupy residues 1459-1470 (NSVSLDFQNSLV) and 1512-1522 (GTEQTQKTVTP). A compositionally biased stretch (basic and acidic residues) spans 1538 to 1547 (PFERKFESPK). A phosphoserine mark is found at Ser1545 and Ser1617. In terms of domain architecture, ZU5 spans 1634–1748 (ATARGIFNSN…NCVSVLIDHF (115 aa)).

The protein belongs to the MAGUK family. As to quaternary structure, homodimer. Forms heterodimers TJP3. Forms a heterodimer (via PDZ2 domain) with TJP2/ZO2 (via PDZ2 domain). Interacts with OCLN, CALM, claudins, CGN/cingulin, CXADR, GJA12, GJD3 and UBN1. Interacts (via ZU5 domain) with CDC42BPB and MYZAP. Interacts (via PDZ domain) with GJA1. Interacts (via PDZ domains) with ANKRD2. Interacts with POPDC1 (via the C-terminus cytoplasmic tail). Interacts with HSPA4 and KIRREL1. Interacts with DLL1. Interacts with USP53 (via the C-terminal region). Interacts (via ABR region) with F-actin. Interacts with DNMBP (via C-terminal domain); required for the apical cell-cell junction localization of DNMBP. Interacts with SPEF1. Interacts (via N-terminus) with CTNNA1. Interacts with CLDN18. Interacts with CLDN16 (via TRV motif); this is a prerequisite for anchoring of CLDN16 at the tight junction. Interacts with PKP1; the interaction facilitates TJP1/ZO-1 localization to the plasma membrane. Interacts with PATJ (via PDZ1-6 domains); the interaction is required for attachment and extension of TJP1/ZO1 condensates along the apical cell interface. In terms of processing, phosphorylated at tyrosine redidues in response to epidermal growth factor (EGF). This response is dependent on an intact actin microfilament system. Dephosphorylated by PTPRJ. The alpha-containing isoform is found in most epithelial cell junctions. The short isoform is found both in endothelial cells and the highly specialized epithelial junctions of renal glomeruli and Sertoli cells of the seminiferous tubules.

The protein resides in the cell membrane. The protein localises to the cell junction. Its subcellular location is the tight junction. It localises to the gap junction. It is found in the cell projection. The protein resides in the podosome. Its function is as follows. TJP1, TJP2, and TJP3 are closely related scaffolding proteins that link tight junction (TJ) transmembrane proteins such as claudins, junctional adhesion molecules, and occludin to the actin cytoskeleton. Forms a multistranded TJP1/ZO1 condensate which elongates to form a tight junction belt, the belt is anchored at the apical cell membrane via interaction with PATJ. The tight junction acts to limit movement of substances through the paracellular space and as a boundary between the compositionally distinct apical and basolateral plasma membrane domains of epithelial and endothelial cells. Necessary for lumenogenesis, and particularly efficient epithelial polarization and barrier formation. Plays a role in the regulation of cell migration by targeting CDC42BPB to the leading edge of migrating cells. Plays an important role in podosome formation and associated function, thus regulating cell adhesion and matrix remodeling. With TJP2 and TJP3, participates in the junctional retention and stability of the transcription factor DBPA, but is not involved in its shuttling to the nucleus. May play a role in mediating cell morphology changes during ameloblast differentiation via its role in tight junctions. The protein is Tight junction protein 1 of Homo sapiens (Human).